Here is a 127-residue protein sequence, read N- to C-terminus: Gonadotropin subunit beta-1 (127 aa).

Residues Met1–Ser22 form the signal peptide. 6 disulfides stabilise this stretch: Cys23/Cys71, Cys37/Cys86, Cys40/Cys124, Cys48/Cys102, Cys52/Cys104, and Cys107/Cys114. N-linked (GlcNAc...) asparagine glycosylation is found at Asn27 and Asn44.

It belongs to the glycoprotein hormones subunit beta family. As to quaternary structure, heterodimer of an alpha and a beta chain.

It is found in the secreted. Functionally, involved in gametogenesis and steroidogenesis. This Anguilla japonica (Japanese eel) protein is Gonadotropin subunit beta-1 (cgba).